The following is a 153-amino-acid chain: Insulin-like growth factor 1 (153 aa).

A b region spans residues 49 to 77 (GPETLCGAELVDALQFVCGPRGFYFNKPT). Intrachain disulfides connect Cys54–Cys96, Cys66–Cys109, and Cys95–Cys100. Residues 78 to 89 (GYGSSIRRAPQT) are c. The tract at residues 90 to 110 (GIVDECCFRSCDLRRLEMYCA) is a. The tract at residues 111–118 (PLKPTKAA) is d. Residues 119 to 153 (RSIRAQRHTDMPKTQKEVHLKNTSRGSAGNKTYRM) constitute a propeptide, e peptide. The interval 120-153 (SIRAQRHTDMPKTQKEVHLKNTSRGSAGNKTYRM) is disordered. The segment covering 125 to 138 (RHTDMPKTQKEVHL) has biased composition (basic and acidic residues). Residues 139–153 (KNTSRGSAGNKTYRM) are compositionally biased toward polar residues.

This sequence belongs to the insulin family. In terms of assembly, forms a ternary complex with IGFR1 and ITGAV:ITGB3. Forms a ternary complex with IGFR1 and ITGA6:ITGB4. Interacts with SH2D3C isoform 2. Forms a ternary complex with IGFBP3 and ALS.

The protein localises to the secreted. Its function is as follows. The insulin-like growth factors, isolated from plasma, are structurally and functionally related to insulin but have a much higher growth-promoting activity. May be a physiological regulator of [1-14C]-2-deoxy-D-glucose (2DG) transport and glycogen synthesis in osteoblasts. Stimulates glucose transport in bone-derived osteoblastic (PyMS) cells and is effective at much lower concentrations than insulin, not only regarding glycogen and DNA synthesis but also with regard to enhancing glucose uptake. May play a role in synapse maturation. Ca(2+)-dependent exocytosis of IGF1 is required for sensory perception of smell in the olfactory bulb. Acts as a ligand for IGF1R. Binds to the alpha subunit of IGF1R, leading to the activation of the intrinsic tyrosine kinase activity which autophosphorylates tyrosine residues in the beta subunit thus initiating a cascade of down-stream signaling events leading to activation of the PI3K-AKT/PKB and the Ras-MAPK pathways. Binds to integrins ITGAV:ITGB3 and ITGA6:ITGB4. Its binding to integrins and subsequent ternary complex formation with integrins and IGFR1 are essential for IGF1 signaling. Induces the phosphorylation and activation of IGFR1, MAPK3/ERK1, MAPK1/ERK2 and AKT1. As part of the MAPK/ERK signaling pathway, acts as a negative regulator of apoptosis in cardiomyocytes via promotion of STUB1/CHIP-mediated ubiquitination and degradation of ICER-type isoforms of CREM. The protein is Insulin-like growth factor 1 of Mus musculus (Mouse).